Here is a 429-residue protein sequence, read N- to C-terminus: MTAALAVVTTSGLEDGVPRSRGEGTGEVVLERGPGAAYHMFVVMEDLVEKLKLLRYEEEFLRKSNLKAPSRHYFALPTNPGEQFYMFCTLAAWLINKAGRPFEQPQEYDDPNATISNILSELRSFGRTADFPPSKLKSGYGEHVCYVLDCFAEEALKYIGFTWKRPIYPVEELEEESVAEDDAELTLNKVDEEFVEEETDNEENFIDLNVLKAQTYHLDMNETAKQEDILESTTDAAEWSLEVERVLPQLKVTIRTDNKDWRIHVDQMHQHRSGIESALKETKGFLDKLHNEITRTLEKISSREKYINNQLENLVQEYRAAQAQLSEAKERYQQGNGGVTERTRLLSEVMEELEKVKQEMEEKGSSMTDGAPLVKIKQSLTKLKQETVEMDIRIGIVEHTLLQSKLKEKSNMTRNMHATVIPEPATGFY.

Residues 304–369 adopt a coiled-coil conformation; sequence EKYINNQLEN…MEEKGSSMTD (66 aa). The segment at 335-426 is pDED; the sequence is GNGGVTERTR…HATVIPEPAT (92 aa).

This sequence belongs to the IFT57 family. As to quaternary structure, component of the IFT complex B, at least composed of IFT20, IFT22, IFT25, IFT27, IFT46, IFT52, TRAF3IP1/IFT54, IFT57, IFT74, IFT80, IFT81, and IFT88. Interacts with IFT20. Interacts with IFT88. Interacts with IFT80, IFT-81, IFT74, IFT172, IFT70B and KIF17. Interacts with BLOC1S2. Interacts with RYBP. Interacts with HOMER1; the interaction possibly prevents the pro-apoptotic effects of IFT57. Interacts with HIP1. In normal conditions, it poorly interacts with HIP1, HIP1 being strongly associated with HTT. However, in mutant HTT proteins with a long poly-Gln region, interaction between HTT and HIP1 is inhibited, promoting the interaction between HIP1 and IFT57, leading to apoptosis. Interacts with BFAR. Interacts with TTC25. Interacts with USH1G. Interacts with chicken anemia virus protein apoptin. In terms of tissue distribution, present in many tissues such as brain, thymus, lymph node, lung, liver, skin and kidney (at protein level).

The protein resides in the cell projection. The protein localises to the cilium. Its subcellular location is the cytoplasm. It is found in the cytoskeleton. It localises to the cilium basal body. Its function is as follows. Required for the formation of cilia. Plays an indirect role in sonic hedgehog signaling, cilia being required for all activity of the hedgehog pathway. Has pro-apoptotic function via its interaction with HIP1, leading to recruit caspase-8 (CASP8) and trigger apoptosis. Has the ability to bind DNA sequence motif 5'-AAAGACATG-3' present in the promoter of caspase genes such as CASP1, CASP8 and CASP10, suggesting that it may act as a transcription regulator; however the relevance of such function remains unclear. This Homo sapiens (Human) protein is Intraflagellar transport protein 57 homolog (IFT57).